A 299-amino-acid chain; its full sequence is Regucalcin (299 aa).

Glutamate 18 is a binding site for a divalent metal cation. Positions 101, 103, and 121 each coordinate substrate. Lysine 144 is subject to N6-succinyllysine. Positions 154 and 204 each coordinate a divalent metal cation. The Proton donor/acceptor role is filled by aspartate 204. N6-succinyllysine occurs at positions 244 and 253.

Belongs to the SMP-30/CGR1 family. In terms of assembly, monomer. Requires Zn(2+) as cofactor. Mn(2+) serves as cofactor. It depends on Ca(2+) as a cofactor. Mg(2+) is required as a cofactor. As to expression, mainly present in the liver. Weak expression was found in the brain, lung and kidney.

It is found in the cytoplasm. It carries out the reaction D-glucono-1,5-lactone + H2O = D-gluconate + H(+). Its pathway is cofactor biosynthesis; L-ascorbate biosynthesis via UDP-alpha-D-glucuronate pathway; L-ascorbate from UDP-alpha-D-glucuronate: step 3/4. In terms of biological role, gluconolactonase with low activity towards other sugar lactones, including gulonolactone and galactonolactone. Catalyzes a key step in ascorbic acid (vitamin C) biosynthesis. Can also hydrolyze diisopropyl phosphorofluoridate and phenylacetate (in vitro). Calcium-binding protein. Modulates Ca(2+) signaling, and Ca(2+)-dependent cellular processes and enzyme activities. The sequence is that of Regucalcin (Rgn) from Mus musculus (Mouse).